Here is a 187-residue protein sequence, read N- to C-terminus: Transmembrane protein 11-A, mitochondrial (187 aa).

Helical transmembrane passes span 79-95 (TAVL…LALP) and 102-119 (VSLP…LYGI).

It belongs to the TMEM11 family.

It localises to the mitochondrion inner membrane. In terms of biological role, plays a role in mitochondrial morphogenesis. The sequence is that of Transmembrane protein 11-A, mitochondrial (tmem11-a) from Xenopus laevis (African clawed frog).